The sequence spans 250 residues: tRNA (guanine-N(1)-)-methyltransferase (250 aa).

Residues glycine 113 and 133–138 contribute to the S-adenosyl-L-methionine site; that span reads IGDYVL.

This sequence belongs to the RNA methyltransferase TrmD family. As to quaternary structure, homodimer.

The protein localises to the cytoplasm. It carries out the reaction guanosine(37) in tRNA + S-adenosyl-L-methionine = N(1)-methylguanosine(37) in tRNA + S-adenosyl-L-homocysteine + H(+). In terms of biological role, specifically methylates guanosine-37 in various tRNAs. The chain is tRNA (guanine-N(1)-)-methyltransferase from Shewanella amazonensis (strain ATCC BAA-1098 / SB2B).